A 261-amino-acid chain; its full sequence is Lysosome-associated membrane glycoprotein 5 (261 aa).

Residues 1-29 form the signal peptide; it reads MDLQGRAVPSVDRLRVLLMLFHTMAQIMA. Topologically, residues 30–234 are extracellular; sequence EQEVENLSGL…AVDEREQLEE (205 aa). Residues asparagine 35, asparagine 53, and asparagine 126 are each glycosylated (N-linked (GlcNAc...) asparagine). The chain crosses the membrane as a helical span at residues 235-255; sequence TLPLILGLILGLVIVVTLAIY. The Cytoplasmic segment spans residues 256–261; that stretch reads HVHPQK.

Belongs to the LAMP family. In terms of processing, glycosylated.

It is found in the cytoplasmic vesicle membrane. The protein resides in the cell membrane. Its subcellular location is the cell projection. The protein localises to the dendrite. It localises to the cytoplasmic vesicle. It is found in the secretory vesicle. The protein resides in the synaptic vesicle membrane. Its subcellular location is the growth cone membrane. The protein localises to the early endosome membrane. It localises to the recycling endosome. It is found in the endoplasmic reticulum-Golgi intermediate compartment membrane. The protein resides in the endosome membrane. Its function is as follows. Plays a role in short-term synaptic plasticity in a subset of GABAergic neurons in the brain. In Pongo abelii (Sumatran orangutan), this protein is Lysosome-associated membrane glycoprotein 5 (LAMP5).